The chain runs to 224 residues: Probable Brix domain-containing ribosomal biogenesis protein (224 aa).

The region spanning 1 to 196 is the Brix domain; that stretch reads MMLITTSHRP…IWIMEDGRRW (196 aa).

In terms of biological role, probably involved in the biogenesis of the ribosome. This chain is Probable Brix domain-containing ribosomal biogenesis protein, found in Pyrococcus abyssi (strain GE5 / Orsay).